We begin with the raw amino-acid sequence, 156 residues long: SsrA-binding protein (156 aa).

This sequence belongs to the SmpB family.

It localises to the cytoplasm. In terms of biological role, required for rescue of stalled ribosomes mediated by trans-translation. Binds to transfer-messenger RNA (tmRNA), required for stable association of tmRNA with ribosomes. tmRNA and SmpB together mimic tRNA shape, replacing the anticodon stem-loop with SmpB. tmRNA is encoded by the ssrA gene; the 2 termini fold to resemble tRNA(Ala) and it encodes a 'tag peptide', a short internal open reading frame. During trans-translation Ala-aminoacylated tmRNA acts like a tRNA, entering the A-site of stalled ribosomes, displacing the stalled mRNA. The ribosome then switches to translate the ORF on the tmRNA; the nascent peptide is terminated with the 'tag peptide' encoded by the tmRNA and targeted for degradation. The ribosome is freed to recommence translation, which seems to be the essential function of trans-translation. The chain is SsrA-binding protein from Staphylococcus haemolyticus (strain JCSC1435).